A 332-amino-acid chain; its full sequence is Large ribosomal subunit protein uL10 (332 aa).

Positions 294-332 are disordered; that stretch reads QAAAAPVAVEDNTEEPEEEEEEEEDAAESAAAGLGALFG. Residues 304 to 320 show a composition bias toward acidic residues; sequence DNTEEPEEEEEEEEDAA.

The protein belongs to the universal ribosomal protein uL10 family. Part of the 50S ribosomal subunit. Forms part of the ribosomal stalk which helps the ribosome interact with GTP-bound translation factors. Forms a heptameric L10(L12)2(L12)2(L12)2 complex, where L10 forms an elongated spine to which the L12 dimers bind in a sequential fashion.

Forms part of the ribosomal stalk, playing a central role in the interaction of the ribosome with GTP-bound translation factors. This is Large ribosomal subunit protein uL10 from Methanosphaera stadtmanae (strain ATCC 43021 / DSM 3091 / JCM 11832 / MCB-3).